The following is a 433-amino-acid chain: Staphylopine synthase (433 aa).

NADP(+) contacts are provided by residues 9–12, Arg33, 37–40, and Asp99; these read TGPV and SEKS. His216 (proton donor/acceptor) is an active-site residue.

Belongs to the staphylopine dehydrogenase family. As to quaternary structure, homodimer.

The catalysed reaction is staphylopine + NADP(+) + H2O = (2S)-2-amino-4-{[(1R)-1-carboxy-2-(1H-imidazol-4-yl)ethyl]amino}butanoate + pyruvate + NADPH + H(+). Functionally, catalyzes the NADPH-dependent reductive condensation of pyruvate to the intermediate formed by the adjacently encoded enzyme CntL, namely (2S)-2-amino-4-{[(1R)-1-carboxy-2-(1H-imidazol-4-yl)ethyl]amino}butanoate, leading to the production of staphylopine. This is the last step in the biosynthesis of the metallophore staphylopine, which is involved in the acquisition of nickel, cobalt, zinc, copper, and iron, and thus enables bacterial growth inside the host, where metal access is limited. Therefore, this enzyme probably contributes to staphylococcal virulence. Can use neither NADH nor alpha-ketoglutarate in place of NADPH and pyruvate, respectively. The protein is Staphylopine synthase of Staphylococcus aureus (strain Mu50 / ATCC 700699).